The following is a 33-amino-acid chain: Non-specific lipid-transfer protein (33 aa).

A disulfide bond links cysteine 14 and cysteine 29.

It belongs to the plant LTP family. Dimer.

Functionally, plant non-specific lipid-transfer proteins transfer phospholipids as well as galactolipids across membranes. May play a role in wax or cutin deposition in the cell walls of expanding epidermal cells and certain secretory tissues. Has antibacterial activity against Gram-positive bacteria S.aureus and S.epidermidis and blocks biofilm formation. In a mouse model, also protects against bacterial sepsis and has an anti-inflammatory effect. Exhibits antinociceptive activity upon oral or intraperitoneal application in mice. The chain is Non-specific lipid-transfer protein from Morinda citrifolia (Indian mulberry).